The primary structure comprises 877 residues: Transcriptional corepressor SEUSS (877 aa).

Disordered stretches follow at residues 1–42 (MVPS…VSPR) and 272–295 (LKSM…PLRP). A compositionally biased stretch (low complexity) spans 272–292 (LKSMPQQRPQLPQQFQQQNLP). The tract at residues 321 to 563 (PEDNNIEFWR…ETRTGPIESL (243 aa)) is dimerization. The short motif at 330–344 (RKFVAEYFAPNAKKR) is the Nuclear localization signal element. Disordered stretches follow at residues 560–599 (IESL…QQQQ), 612–633 (QQTV…LMQG), and 666–753 (GRHQ…NESS). Residues 582–618 (QQASDQLRQQQQQQQQQQQQQQQQQQQQQQQQTVSQN) adopt a coiled-coil conformation. The segment covering 590–599 (QQQQQQQQQQ) has biased composition (low complexity). A compositionally biased stretch (polar residues) spans 614–633 (TVSQNTNSDQSSRQVALMQG). 2 stretches are compositionally biased toward low complexity: residues 688–703 (QSPS…SSQQ) and 711–725 (QSPT…PSQN). Positions 726 to 741 (GIPSVNHMGSTNSPAM) are enriched in polar residues.

It belongs to the adn1/SEU family. Forms a corepressor complex with LUG; LUG is the transcription repressor subunit and SEU the specific DNA-binding adapter. Interacts with AGL24-AP1 and SVP-AP1 dimers when complexed to SEU. Interacts with AP1/AGL7 and SEP3/AGL9. Binds to LUH. Expressed in root, leaves, seedlings, vegetative and reproductive shoot apical meristems, seeds, floral meristems and all floral organs.

It is found in the nucleus. It localises to the nucleoplasm. DNA-binding adapter subunit of the SEU-LUG transcriptional corepressor of the C class floral homeotic gene AGAMOUS during the early stages of floral meristem development. Is part of the A class cadastral complex that define the boundaries between the A and C class homeotic genes expression and function. Interacts together with APETALA2 and LEUNIG to repress AGAMOUS expression. In association with LUG, regulates petal shape through AGAMOUS-independent mechanisms. Controls cell division during petal development and enable the proper patterning of petal blade vasculature. Required for the proper elaboration of petal polarity along the adaxial/abaxial axis. May act through direct or indirect regulation of PHABULOSA and YAB1 and thus regulate cellular proliferation within the developing petal blade. In association with AINTEGUMENTA (ANT), coordinates patterning cues and cellular proliferation along the three positional axes of the developing gynoecium. Required for the development of the medial ridge and subsequent ovule initiation. In Arabidopsis thaliana (Mouse-ear cress), this protein is Transcriptional corepressor SEUSS (SEU).